The chain runs to 778 residues: pH-response regulator protein palH/prr-4 (778 aa).

Over 1 to 108 (MEPRQLFSDP…DPFYASTFPQ (108 aa)) the chain is Extracellular. Residues 109 to 129 (CYALAATTIIAYTLVIMLFIT) form a helical membrane-spanning segment. Residues 130 to 160 (PRSFLDGGVVVLGRKGFTNGGGGTSIGGRPW) lie on the Periplasmic side of the membrane. The chain crosses the membrane as a helical span at residues 161–181 (LQKVAALSVAISLTIANAATF). Topologically, residues 182-201 (RAAEQQYSWGVQNAKQLQED) are extracellular. A helical transmembrane segment spans residues 202–222 (VLGGAELKIIRIISDTFLWLA). Over 223–237 (QAQTLIRLFPRQREK) the chain is Periplasmic. The chain crosses the membrane as a helical span at residues 238–258 (VIIKWTAFALITLDVIFQSLN). Over 259–275 (SFKYGGSDLTRPKFTEA) the chain is Extracellular. The chain crosses the membrane as a helical span at residues 276 to 296 (VPALSYLFALALGVLYAAWVL). Topologically, residues 297 to 314 (YYSIMKKRYAFYHPLMKN) are periplasmic. The helical transmembrane segment at 315 to 335 (MILVAVLSVVSILVPVVFFIL) threads the bilayer. The Extracellular segment spans residues 336 to 341 (DISKPD). Residues 342–362 (FAGWGDYVRWVGAAAASVIVW) traverse the membrane as a helical segment. The Periplasmic portion of the chain corresponds to 363-778 (EWVERIEALE…RSDSSTTPSP (416 aa)). Disordered regions lie at residues 394 to 499 (ASQS…DTTS), 514 to 605 (ELTS…DENS), and 660 to 778 (ELNH…TPSP). Positions 446–456 (HRTEPSSRNEP) are enriched in basic and acidic residues. Residues 457 to 466 (NEGSSPVAET) are compositionally biased toward polar residues. Composition is skewed to basic and acidic residues over residues 588 to 605 (FVTR…DENS) and 661 to 675 (LNHS…EESR). Residues 720–732 (PIVTQGSFTNNRY) show a composition bias toward polar residues. The span at 749–759 (ARAPSQPQSPS) shows a compositional bias: low complexity. Positions 769-778 (RSDSSTTPSP) are enriched in polar residues.

This sequence belongs to the palH/RIM21 family.

It is found in the cell membrane. In terms of biological role, required for the proteolytic cleavage of the transcription factor pacc-1 in response to alkaline ambient pH. The chain is pH-response regulator protein palH/prr-4 (prr-4) from Neurospora crassa (strain ATCC 24698 / 74-OR23-1A / CBS 708.71 / DSM 1257 / FGSC 987).